The primary structure comprises 607 residues: Homologous recombination OB-fold protein (607 aa).

Disordered stretches follow at residues leucine 25–alanine 49, isoleucine 84–glutamine 108, proline 196–threonine 308, and leucine 531–aspartate 581. 2 stretches are compositionally biased toward polar residues: residues proline 27–alanine 49 and glutamine 92–glutamine 108. Serine 30 is subject to Phosphoserine. The residue at position 281 (arginine 281) is an Asymmetric dimethylarginine. Positions serine 295–threonine 308 are enriched in low complexity. Over residues proline 570–aspartate 581 the composition is skewed to acidic residues.

In terms of assembly, interacts with MCM8; this interaction is necessary for MCM8-MCM9 helicase complex recruitment to DNA damage sites. Interacts with RPA1; this interaction associates HROB with the RPA complex.

The protein localises to the nucleus. The protein resides in the chromosome. DNA-binding protein involved in homologous recombination that acts by recruiting the MCM8-MCM9 helicase complex to sites of DNA damage to promote DNA repair synthesis. In Rattus norvegicus (Rat), this protein is Homologous recombination OB-fold protein.